A 168-amino-acid polypeptide reads, in one-letter code: Small ribosomal subunit protein bS6 (168 aa).

Residues 103 to 168 (RQAIAEEKEK…AAADKSDDNA (66 aa)) are disordered. The segment covering 106-115 (IAEEKEKKAE) has biased composition (basic and acidic residues). Over residues 116-125 (GQAAADAAPA) the composition is skewed to low complexity.

Belongs to the bacterial ribosomal protein bS6 family.

Functionally, binds together with bS18 to 16S ribosomal RNA. The polypeptide is Small ribosomal subunit protein bS6 (Desulfosudis oleivorans (strain DSM 6200 / JCM 39069 / Hxd3) (Desulfococcus oleovorans)).